The following is a 1495-amino-acid chain: DNA-directed RNA polymerase subunit 1 (1495 aa).

This sequence belongs to the RNA polymerase beta' chain family.

Its subcellular location is the virion. The catalysed reaction is RNA(n) + a ribonucleoside 5'-triphosphate = RNA(n+1) + diphosphate. Its function is as follows. DNA-dependent RNA polymerase catalyzes the transcription of DNA into RNA using the four ribonucleoside triphosphates as substrates. The polypeptide is DNA-directed RNA polymerase subunit 1 (RPO1) (Acanthamoeba polyphaga (Amoeba)).